The sequence spans 78 residues: Acyl carrier protein AcpP (78 aa).

Positions 2–77 (SDTAERVKKI…DAVKYIDKAS (76 aa)) constitute a Carrier domain. Ser37 carries the O-(pantetheine 4'-phosphoryl)serine modification.

It belongs to the acyl carrier protein (ACP) family. 4'-phosphopantetheine is transferred from CoA to a specific serine of apo-ACP by AcpS. This modification is essential for activity because fatty acids are bound in thioester linkage to the sulfhydryl of the prosthetic group.

Its subcellular location is the cytoplasm. It participates in lipid metabolism; fatty acid biosynthesis. In terms of biological role, carrier of the growing fatty acid chain in fatty acid biosynthesis. This Mesorhizobium japonicum (strain LMG 29417 / CECT 9101 / MAFF 303099) (Mesorhizobium loti (strain MAFF 303099)) protein is Acyl carrier protein AcpP.